The following is a 93-amino-acid chain: Protein S100-A8 (93 aa).

EF-hand domains follow at residues 12–47 (IIDVYHKYSLIKGNFHAVYRDDLKKLLETECPQYIR) and 46–81 (IRKKGADVWFKELDINTDGAVNFQEFLILVIKMGVA). Residues histidine 17 and histidine 27 each coordinate Zn(2+). A Ca(2+)-binding site is contributed by aspartate 33. An S-nitrosocysteine modification is found at cysteine 42. 4 residues coordinate Ca(2+): aspartate 59, asparagine 61, aspartate 63, and glutamate 70. Residues histidine 83 and histidine 87 each contribute to the Zn(2+) site.

Belongs to the S-100 family. In terms of assembly, homodimer. Preferentially exists as a heterodimer or heterotetramer with S100A9 known as calprotectin (S100A8/A9). S100A8 interacts with AGER, ATP2A2 and with the heterodimeric complex formed by TLR4 and LY96. Interacts with GAPDH. Calprotectin (S100A8/9) interacts with CEACAM3 and tubulin filaments in a calcium-dependent manner. Heterotetrameric calprotectin (S100A8/A9) interacts with ANXA6 and associates with tubulin filaments in activated monocytes. S100A8 and calprotectin (S100A8/9) interact with NCF2/P67PHOX, RAC1 and RAC2. Calprotectin (S100A8/9) interacts with CYBA and CYBB. Calprotectin (S100A8/9) interacts with NOS2 to form the iNOS-S100A8/A9 transnitrosylase complex; induced by LDL(ox). Calprotectin (S100A8/9) interacts with CD69. In terms of tissue distribution, calprotectin (S100A8/9) is predominantly expressed in myeloid cells. Except for inflammatory conditions, the expression is restricted to a specific stage of myeloid differentiation since both proteins are expressed in circulating neutrophils and monocytes but are absent in normal tissue macrophages and lymphocytes. Under chronic inflammatory conditions, such as psoriasis and malignant disorders, also expressed in the epidermis. Found in high concentrations at local sites of inflammation or in the serum of patients with inflammatory diseases such as rheumatoid, cystic fibrosis, inflammatory bowel disease, Crohn's disease, giant cell arteritis, cystic fibrosis, Sjogren's syndrome, systemic lupus erythematosus, and progressive systemic sclerosis. Involved in the formation and deposition of amyloids in the aging prostate known as corpora amylacea inclusions. Strongly up-regulated in many tumors, including gastric, esophageal, colon, pancreatic, bladder, ovarian, thyroid, breast and skin cancers.

It is found in the secreted. Its subcellular location is the cytoplasm. It localises to the cytoskeleton. The protein resides in the cell membrane. Its activity is regulated as follows. Calprotectin (S100A8/A9) activity on TLR4 signaling is inhibited by paquinimod. In terms of biological role, S100A8 is a calcium- and zinc-binding protein which plays a prominent role in the regulation of inflammatory processes and immune response. It can induce neutrophil chemotaxis and adhesion. Predominantly found as calprotectin (S100A8/A9) which has a wide plethora of intra- and extracellular functions. The intracellular functions include: facilitating leukocyte arachidonic acid trafficking and metabolism, modulation of the tubulin-dependent cytoskeleton during migration of phagocytes and activation of the neutrophilic NADPH-oxidase. Also participates in regulatory T-cell differentiation together with CD69. Activates NADPH-oxidase by facilitating the enzyme complex assembly at the cell membrane, transferring arachidonic acid, an essential cofactor, to the enzyme complex and S100A8 contributes to the enzyme assembly by directly binding to NCF2/P67PHOX. The extracellular functions involve pro-inflammatory, antimicrobial, oxidant-scavenging and apoptosis-inducing activities. Its pro-inflammatory activity includes recruitment of leukocytes, promotion of cytokine and chemokine production, and regulation of leukocyte adhesion and migration. Acts as an alarmin or a danger associated molecular pattern (DAMP) molecule and stimulates innate immune cells via binding to pattern recognition receptors such as Toll-like receptor 4 (TLR4) and receptor for advanced glycation endproducts (AGER). Binding to TLR4 and AGER activates the MAP-kinase and NF-kappa-B signaling pathways resulting in the amplification of the pro-inflammatory cascade. Has antimicrobial activity towards bacteria and fungi and exerts its antimicrobial activity probably via chelation of Zn(2+) which is essential for microbial growth. Can induce cell death via autophagy and apoptosis and this occurs through the cross-talk of mitochondria and lysosomes via reactive oxygen species (ROS) and the process involves BNIP3. Can regulate neutrophil number and apoptosis by an anti-apoptotic effect; regulates cell survival via ITGAM/ITGB and TLR4 and a signaling mechanism involving MEK-ERK. Its role as an oxidant scavenger has a protective role in preventing exaggerated tissue damage by scavenging oxidants. Can act as a potent amplifier of inflammation in autoimmunity as well as in cancer development and tumor spread. The iNOS-S100A8/A9 transnitrosylase complex directs selective inflammatory stimulus-dependent S-nitrosylation of GAPDH and probably multiple targets such as ANXA5, EZR, MSN and VIM by recognizing a [IL]-x-C-x-x-[DE] motif; S100A8 seems to contribute to S-nitrosylation site selectivity. Its function is as follows. (Microbial infection) Upon infection by human coronavirus SARS-CoV-2, may induce expansion of aberrant immature neutrophils in a TLR4-dependent manner. The chain is Protein S100-A8 from Homo sapiens (Human).